The sequence spans 814 residues: Rho GTPase-activating protein 26 (814 aa).

The region spanning 7–262 is the BAR domain; the sequence is EFSDCCLDSP…MKENPLEHKT (256 aa). Residues 265–369 enclose the PH domain; sequence PYTMEGYLYV…WMEAMDGREP (105 aa). The region spanning 383 to 568 is the Rho-GAP domain; the sequence is AQLDSIGFSI…ILIENHEKIF (186 aa). 2 disordered regions span residues 584 to 618 and 638 to 696; these read SRKKSSDSKPPSCSKRPLTLFHAVPSTEKQEQRNS and SSSL…SSDS. Low complexity-rich tracts occupy residues 591 to 600 and 638 to 661; these read SKPPSCSKRP and SSSLQPNLNSSDSNLDVVKPSRPS. Over residues 662–672 the composition is skewed to pro residues; it reads SLPPNPSPTSP. The residue at position 668 (Ser668) is a Phosphoserine. Thr670 carries the post-translational modification Phosphothreonine. Ser671 carries the phosphoserine modification. Residues 673 to 696 are compositionally biased toward low complexity; sequence LSPSWPMFSAPSSPMPTSSTSSDS. The SH3 domain occupies 756 to 814; the sequence is TPFRKAKALYACQAEHDSELSFTAGTVFDNVHPSQEPGWLEGTLNGKTGLIPENYVEFL.

Interacts with NYAP1, NYAP2 and MYO16. Interacts with MICAL1 and WDR44. Binds to the C-terminus of PTK2/FAK1. Post-translationally, phosphorylated in a PINK1-dependent fashion promoting retrograde mitochondrial trafficking and clustering.

The protein resides in the cell junction. It localises to the focal adhesion. Its subcellular location is the cytoplasm. The protein localises to the cytoskeleton. It is found in the endosome membrane. GTPase-activating protein for RHOA and CDC42. Facilitates mitochondrial quality control by promoting Parkin-mediated recruitment of autophagosomes to damaged mitochondria. Associates with MICAL1 on the endosomal membrane to promote Rab8-Rab10-dependent tubule extension. After dissociation of MICAL1, recruits WDR44 which connects the endoplasmic reticulum (ER) with the endosomal tubule, thereby participating in the export of a subset of neosynthesized proteins. This is Rho GTPase-activating protein 26 (Arhgap26) from Mus musculus (Mouse).